The primary structure comprises 451 residues: Pre-mRNA-splicing factor PRP46 (451 aa).

7 WD repeats span residues 137–168 (GHLG…KVWD), 180–210 (GHVM…KCWD), 222–252 (GHLS…KLWD), 264–294 (GHKG…RLWD), 306–335 (HHKR…RSWG), 348–377 (EKTG…SFYD), and 397–427 (EGER…KIWK).

The protein belongs to the WD repeat PRL1/PRL2 family. Belongs to the CWC complex (or CEF1-associated complex), a spliceosome subcomplex composed of the U2, U5 and U6 snRNAs and at least BUD13, BUD31, BRR2, CDC40, CEF1, CLF1, CUS1, CWC2, CWC15, CWC21, CWC22, CWC23, CWC24, CWC25, CWC27, ECM2, HSH155, IST3, ISY1, LEA1, MSL1, NTC20, PRP8, PRP9, PRP11, PRP19, PRP21, PRP22, PRP45, PRP46, SLU7, SMB1, SMD1, SMD2, SMD3, SMX2, SMX3, SNT309, SNU114, SPP2, SYF1, SYF2, RSE1 and YJU2. Interacts with CEF1, CLF1, NTC20, PRP45 and SYF1.

Its subcellular location is the cytoplasm. It is found in the nucleus. In terms of biological role, involved in pre-mRNA splicing. May also be required for cell cycle progression at G2/M. This is Pre-mRNA-splicing factor PRP46 (PRP46) from Saccharomyces cerevisiae (strain ATCC 204508 / S288c) (Baker's yeast).